The sequence spans 206 residues: Flavin reductase (NADPH) (206 aa).

Residues Gly10, Thr12, Gly13, Asn14, Thr15, Arg35, Ser38, and Arg39 each coordinate NADP(+). Phosphoserine is present on Ser42. The NADP(+) site is built by Asp54, Val55, Leu75, Gly76, and Arg78. Residue Ser82 is modified to Phosphoserine. The NADP(+) site is built by Met87, Cys109, His132, His153, and Ile154. Cys109 functions as the S-nitroso-cysteine intermediate; for S-nitroso-CoA-dependent nitrosyltransferase activity in the catalytic mechanism. The active-site S-nitroso-cysteine intermediate; for S-nitroso-CoA-dependent nitrosyltransferase activity is the Cys188.

Monomer. In terms of tissue distribution, at least expressed in the liver and erythrocyte.

The protein resides in the cytoplasm. It carries out the reaction reduced riboflavin + NADP(+) = riboflavin + NADPH + 2 H(+). The catalysed reaction is bilirubin IXbeta + NADP(+) = biliverdin IXbeta + NADPH + H(+). It catalyses the reaction FMNH2 + NAD(+) = FMN + NADH + 2 H(+). The enzyme catalyses FMNH2 + NADP(+) = FMN + NADPH + 2 H(+). It carries out the reaction S-nitroso-CoA + L-cysteinyl-[protein] = S-nitroso-L-cysteinyl-[protein] + CoA. The catalysed reaction is L-cysteinyl-[SCAN] + S-nitroso-CoA = S-nitroso-L-cysteinyl-[SCAN] + CoA. It catalyses the reaction S-nitroso-L-cysteinyl-[SCAN] + L-cysteinyl-[protein] = L-cysteinyl-[SCAN] + S-nitroso-L-cysteinyl-[protein]. Functionally, enzyme that can both act as a NAD(P)H-dependent reductase and a S-nitroso-CoA-dependent nitrosyltransferase. Promotes fetal heme degradation during development. Also expressed in adult tissues, where it acts as a regulator of hematopoiesis, intermediary metabolism (glutaminolysis, glycolysis, TCA cycle and pentose phosphate pathway) and insulin signaling. Has a broad specificity oxidoreductase activity by catalyzing the NAD(P)H-dependent reduction of a variety of flavins, such as riboflavin, FAD or FMN, biliverdins, methemoglobin and PQQ (pyrroloquinoline quinone). Contributes to fetal heme catabolism by catalyzing reduction of biliverdin IXbeta into bilirubin IXbeta in the liver. Biliverdin IXbeta, which constitutes the major heme catabolite in the fetus is not present in adult. Does not reduce bilirubin IXalpha. Can also reduce the complexed Fe(3+) iron to Fe(2+) in the presence of FMN and NADPH. Acts as a protein nitrosyltransferase by catalyzing nitrosylation of cysteine residues of target proteins, such as HMOX2, INSR and IRS1. S-nitroso-CoA-dependent nitrosyltransferase activity is mediated via a 'ping-pong' mechanism: BLVRB first associates with both S-nitroso-CoA and protein substrate, nitric oxide group is then transferred from S-nitroso-CoA to Cys-109 and Cys-188 residues of BLVRB and from S-nitroso-BLVRB to the protein substrate. Inhibits insulin signaling by mediating nitrosylation of INSR and IRS1, leading to their inhibition. This chain is Flavin reductase (NADPH) (BLVRB), found in Bos taurus (Bovine).